Reading from the N-terminus, the 331-residue chain is dTDP-glucose 4,6-dehydratase (331 aa).

Residues 11–12 (FI), 33–36 (DALT), 57–58 (DI), 77–81 (FAAES), and Thr-96 contribute to the NAD(+) site. Ser-81 contributes to the substrate binding site. Thr-120 serves as a coordination point for substrate. The Proton donor role is filled by Asp-121. Residues Glu-122 and Tyr-147 each act as proton acceptor in the active site. 147 to 151 (YSATK) contributes to the NAD(+) binding site. Asn-176 is a substrate binding site. Residue Asn-177 coordinates NAD(+). Residues 186 to 191 (KFIPRQ), 202 to 204 (KLY), Arg-211, Asn-246, and 269 to 273 (DRVGH) each bind substrate.

This sequence belongs to the NAD(P)-dependent epimerase/dehydratase family. dTDP-glucose dehydratase subfamily. Homodimer. The cofactor is NAD(+).

The catalysed reaction is dTDP-alpha-D-glucose = dTDP-4-dehydro-6-deoxy-alpha-D-glucose + H2O. The protein operates within carbohydrate biosynthesis; dTDP-L-rhamnose biosynthesis. Functionally, catalyzes the dehydration of dTDP-D-glucose to form dTDP-6-deoxy-D-xylo-4-hexulose via a three-step process involving oxidation, dehydration and reduction. Involved in the biosynthesis of the dTDP-L-rhamnose which is a component of the critical linker, D-N-acetylglucosamine-L-rhamnose disaccharide, which connects the galactan region of arabinogalactan to peptidoglycan via a phosphodiester linkage. The chain is dTDP-glucose 4,6-dehydratase (rmlB) from Mycobacterium tuberculosis (strain CDC 1551 / Oshkosh).